The primary structure comprises 136 residues: Globin CTP-III (136 aa).

Residues 1–136 (LSADQISTVQ…TFFGMIFSKM (136 aa)) form the Globin domain. H87 contributes to the heme b binding site.

This sequence belongs to the globin family. Monomer.

In Chironomus thummi piger (Midge), this protein is Globin CTP-III.